We begin with the raw amino-acid sequence, 423 residues long: Putative competence-damage inducible protein (423 aa).

This sequence belongs to the CinA family.

The protein is Putative competence-damage inducible protein of Streptococcus pyogenes serotype M3 (strain ATCC BAA-595 / MGAS315).